Here is a 378-residue protein sequence, read N- to C-terminus: MAGETIVNLLDLDAEGLVAYCGSLGEKAFRAKQLQRWIHQYNAADFDGMTDLAKSLREKLKGRAVIGTPDILSDHVSADGTRKWLINVGNGNAVETVFIPEETRGTLCVSSQAGCAVNCRFCSTGKQGFSRNLSTGEIVGQLRMAEFALRASLGRAPGPNGKAERVITNVVMMGMGEPLLNYSAVVPAMRLMLDDNAYGLSRRRVTLSTSGVVPMMDRLGAELPVALAVSLHAPNDALRDELVPLNKKHPLRELMAACQRYLKVAPRDFITFEYCMLDGVNDTEAHARELLAVTRDVPCKFNLIPFNPFPESGLVRSKTEQIKRFAQVLIDAGVVTTIRKTRGDDIDAACGQLAGAVKDRTRLAERTGASKIIEVRAV.

Glu95 (proton acceptor) is an active-site residue. The region spanning 101 to 345 is the Radical SAM core domain; the sequence is EETRGTLCVS…TTIRKTRGDD (245 aa). Cys108 and Cys350 form a disulfide bridge. Residues Cys115, Cys119, and Cys122 each contribute to the [4Fe-4S] cluster site. S-adenosyl-L-methionine contacts are provided by residues 176–177, Ser208, 230–232, and Asn307; these read GE and SLH. Cys350 (S-methylcysteine intermediate) is an active-site residue.

Belongs to the radical SAM superfamily. RlmN family. Requires [4Fe-4S] cluster as cofactor.

Its subcellular location is the cytoplasm. The enzyme catalyses adenosine(2503) in 23S rRNA + 2 reduced [2Fe-2S]-[ferredoxin] + 2 S-adenosyl-L-methionine = 2-methyladenosine(2503) in 23S rRNA + 5'-deoxyadenosine + L-methionine + 2 oxidized [2Fe-2S]-[ferredoxin] + S-adenosyl-L-homocysteine. The catalysed reaction is adenosine(37) in tRNA + 2 reduced [2Fe-2S]-[ferredoxin] + 2 S-adenosyl-L-methionine = 2-methyladenosine(37) in tRNA + 5'-deoxyadenosine + L-methionine + 2 oxidized [2Fe-2S]-[ferredoxin] + S-adenosyl-L-homocysteine. Specifically methylates position 2 of adenine 2503 in 23S rRNA and position 2 of adenine 37 in tRNAs. m2A2503 modification seems to play a crucial role in the proofreading step occurring at the peptidyl transferase center and thus would serve to optimize ribosomal fidelity. This chain is Dual-specificity RNA methyltransferase RlmN, found in Burkholderia pseudomallei (strain K96243).